The chain runs to 229 residues: 2,3-bisphosphoglycerate-dependent phosphoglycerate mutase (229 aa).

Residues 7–14, 20–21, arginine 59, 86–89, lysine 97, 113–114, and 182–183 contribute to the substrate site; these read RHGQSEWN, TG, ERHY, RR, and GN. Histidine 8 functions as the Tele-phosphohistidine intermediate in the catalytic mechanism. Glutamate 86 functions as the Proton donor/acceptor in the catalytic mechanism.

Belongs to the phosphoglycerate mutase family. BPG-dependent PGAM subfamily.

The catalysed reaction is (2R)-2-phosphoglycerate = (2R)-3-phosphoglycerate. Its pathway is carbohydrate degradation; glycolysis; pyruvate from D-glyceraldehyde 3-phosphate: step 3/5. Functionally, catalyzes the interconversion of 2-phosphoglycerate and 3-phosphoglycerate. The protein is 2,3-bisphosphoglycerate-dependent phosphoglycerate mutase of Listeria monocytogenes serotype 4b (strain F2365).